Reading from the N-terminus, the 1341-residue chain is DNA-directed RNA polymerase subunit beta (1341 aa).

This sequence belongs to the RNA polymerase beta chain family. In terms of assembly, the RNAP catalytic core consists of 2 alpha, 1 beta, 1 beta' and 1 omega subunit. When a sigma factor is associated with the core the holoenzyme is formed, which can initiate transcription.

The catalysed reaction is RNA(n) + a ribonucleoside 5'-triphosphate = RNA(n+1) + diphosphate. Its function is as follows. DNA-dependent RNA polymerase catalyzes the transcription of DNA into RNA using the four ribonucleoside triphosphates as substrates. This is DNA-directed RNA polymerase subunit beta from Vibrio cholerae serotype O1 (strain ATCC 39315 / El Tor Inaba N16961).